The primary structure comprises 343 residues: Protein RecA (343 aa).

ATP is bound at residue 64 to 71; the sequence is GPESSGKT.

The protein belongs to the RecA family.

The protein resides in the cytoplasm. Its function is as follows. Can catalyze the hydrolysis of ATP in the presence of single-stranded DNA, the ATP-dependent uptake of single-stranded DNA by duplex DNA, and the ATP-dependent hybridization of homologous single-stranded DNAs. It interacts with LexA causing its activation and leading to its autocatalytic cleavage. The chain is Protein RecA from Bacillus cereus (strain ATCC 10987 / NRS 248).